The primary structure comprises 80 residues: Probable antimicrobial peptide clone Con10 (80 aa).

Residues 1–24 (MQYKTKTFLVIFLAYLVVTNEAEA) form the signal peptide. Residues 56-80 (EIEDFFDPYQRELDLELERLLSQLQ) constitute a propeptide that is removed on maturation.

This sequence belongs to the non-disulfide-bridged peptide (NDBP) superfamily. Medium-length antimicrobial peptide (group 3) family. Expressed by the venom gland.

The protein localises to the secreted. It localises to the target cell membrane. Functionally, antimicrobial peptide. Has antifungal activity against all strains tested (MIC=12.5-200 uM). May act by disrupting the integrity of the bacterial cell membrane. The protein is Probable antimicrobial peptide clone Con10 of Opisthacanthus cayaporum (South American scorpion).